We begin with the raw amino-acid sequence, 364 residues long: Popeye domain-containing protein 2 (364 aa).

N4 carries an N-linked (GlcNAc...) asparagine glycan. The next 2 membrane-spanning stretches (helical) occupy residues L37–L57 and I77–Y97. The disordered stretch occupies residues A276–S333. Positions T300–P309 are enriched in polar residues. A Phosphothreonine modification is found at T361.

Belongs to the popeye family. In terms of tissue distribution, expressed predominantly in the heart and in the skeletal muscle.

The protein localises to the membrane. Its subcellular location is the cell membrane. It is found in the sarcolemma. Its function is as follows. Important for the maintenance of cardiac function. Plays a regulatory function in heart rate dynamics mediated, at least in part, through cAMP-binding and, probably, by increasing cell surface expression of the potassium channel KCNK2 and enhancing current density. The chain is Popeye domain-containing protein 2 (POPDC2) from Homo sapiens (Human).